The sequence spans 1002 residues: Ephrin type-B receptor 5 (1002 aa).

Positions 1 to 29 (MDSNADISARRVSGMDWLWLVCFFHLVTS) are cleaved as a signal peptide. The Extracellular segment spans residues 30–564 (LEEILLDTTG…AQDRLPLIVG (535 aa)). One can recognise an Eph LBD domain in the interval 31–213 (EEILLDTTGE…FFYKCPAVVK (183 aa)). 2 Fibronectin type-III domains span residues 344–452 (APRD…TSQS) and 453–548 (VPSA…TLMA). Residue N446 is glycosylated (N-linked (GlcNAc...) asparagine). The helical transmembrane segment at 565–585 (SALGGLAFLVIAAIAILAIIF) threads the bilayer. Residues 586–1002 (KSKRRETPYT…HLNQLEPVEV (417 aa)) lie on the Cytoplasmic side of the membrane. The 264-residue stretch at 637-900 (IKIEEVIGSG…QIVSALDKMI (264 aa)) folds into the Protein kinase domain. ATP contacts are provided by residues 643–651 (IGSGEFGEV) and K669. D762 acts as the Proton acceptor in catalysis. The disordered stretch occupies residues 906–928 (LKATGTGSSRPSQPLLSNSPPDF). A compositionally biased stretch (polar residues) spans 910–928 (GTGSSRPSQPLLSNSPPDF). The SAM domain occupies 929–993 (PSLSNAHEWL…LNSIQLMKVH (65 aa)). Residues 1000–1002 (VEV) carry the PDZ-binding motif.

Belongs to the protein kinase superfamily. Tyr protein kinase family. Ephrin receptor subfamily. As to expression, most abundant in thymus and detectable in brain, retina, kidney, lung and heart. Not detected in skeletal muscle and liver.

The protein localises to the membrane. The enzyme catalyses L-tyrosyl-[protein] + ATP = O-phospho-L-tyrosyl-[protein] + ADP + H(+). Functionally, receptor for members of the ephrin-B family. This chain is Ephrin type-B receptor 5 (EPHB5), found in Gallus gallus (Chicken).